The chain runs to 720 residues: Denticleless protein homolog (720 aa).

WD repeat units follow at residues 43-85 (GMPV…TTKL), 92-131 (AHSN…LLGI), and 134-174 (GHQC…KDGF). A DDB1-binding motif motif is present at residues 164–167 (WDTR). The short motif at 193 to 200 (PSKLRKKR) is the Nuclear localization signal element. WD repeat units follow at residues 211 to 250 (DFQQ…AAYR), 266 to 305 (TRKL…TFPV), 310 to 351 (GHQN…LPPR), and 355 to 395 (GHSQ…EEEK). The short motif at 240-243 (WDLR) is the DDB1-binding motif element. Disordered stretches follow at residues 411-437 (KPEE…VGSP), 476-495 (PAKL…PSSK), 528-552 (QSLL…KRRL), and 607-698 (NEHE…TSPK). Over residues 528–542 (QSLLETSSTPKAQHS) the composition is skewed to polar residues. Basic and acidic residues-rich tracts occupy residues 543 to 552 (QAEKRAKRRL) and 642 to 660 (CERD…ERKN).

Belongs to the WD repeat cdt2 family. Component of the DCX(DTL) E3 ubiquitin ligase complex, at least composed of CUL4 (CUL4A or CUL4B), DDB1, DTL/CDT2 and RBX1.

It localises to the nucleus. Its subcellular location is the cytoplasm. The protein resides in the cytoskeleton. The protein localises to the microtubule organizing center. It is found in the centrosome. It localises to the chromosome. It participates in protein modification; protein ubiquitination. Functionally, substrate-specific adapter of a DCX (DDB1-CUL4-X-box) E3 ubiquitin-protein ligase complex required for cell cycle control, DNA damage response and translesion DNA synthesis. The DCX(DTL) complex, also named CRL4(CDT2) complex, mediates the polyubiquitination and subsequent degradation of CDT1, CDKN1A/p21(CIP1), KMT5A and SDE2. CDT1 degradation in response to DNA damage is necessary to ensure proper cell cycle regulation of DNA replication. CDKN1A/p21(CIP1) degradation during S phase or following UV irradiation is essential to control replication licensing. KMT5A degradation is also important for a proper regulation of mechanisms such as TGF-beta signaling, cell cycle progression, DNA repair and cell migration. Most substrates require their interaction with PCNA for their polyubiquitination: substrates interact with PCNA via their PIP-box, and those containing the 'K+4' motif in the PIP box, recruit the DCX(DTL) complex, leading to their degradation. In undamaged proliferating cells, the DCX(DTL) complex also promotes the 'Lys-164' monoubiquitination of PCNA, thereby being involved in PCNA-dependent translesion DNA synthesis. May play a role in the regulation of the circadian clock. This Gallus gallus (Chicken) protein is Denticleless protein homolog (DTL).